The sequence spans 267 residues: Triosephosphate isomerase (267 aa).

12 to 14 lines the substrate pocket; that stretch reads NWK. Residue histidine 104 is the Electrophile of the active site. The Proton acceptor role is filled by glutamate 176. Substrate is bound by residues glycine 182, serine 222, and 243-244; that span reads GG.

It belongs to the triosephosphate isomerase family. In terms of assembly, homodimer.

It localises to the cytoplasm. The enzyme catalyses D-glyceraldehyde 3-phosphate = dihydroxyacetone phosphate. It participates in carbohydrate biosynthesis; gluconeogenesis. It functions in the pathway carbohydrate degradation; glycolysis; D-glyceraldehyde 3-phosphate from glycerone phosphate: step 1/1. In terms of biological role, involved in the gluconeogenesis. Catalyzes stereospecifically the conversion of dihydroxyacetone phosphate (DHAP) to D-glyceraldehyde-3-phosphate (G3P). In Bifidobacterium longum (strain DJO10A), this protein is Triosephosphate isomerase.